We begin with the raw amino-acid sequence, 447 residues long: N-succinylarginine dihydrolase (447 aa).

Residues 19-28 (AGLSFGNEAS), asparagine 110, and 137-138 (HR) each bind substrate. Glutamate 174 is an active-site residue. Arginine 214 is a binding site for substrate. Residue histidine 250 is part of the active site. Substrate is bound by residues aspartate 252 and asparagine 365. The Nucleophile role is filled by cysteine 371.

It belongs to the succinylarginine dihydrolase family. Homodimer.

It carries out the reaction N(2)-succinyl-L-arginine + 2 H2O + 2 H(+) = N(2)-succinyl-L-ornithine + 2 NH4(+) + CO2. Its pathway is amino-acid degradation; L-arginine degradation via AST pathway; L-glutamate and succinate from L-arginine: step 2/5. Its function is as follows. Catalyzes the hydrolysis of N(2)-succinylarginine into N(2)-succinylornithine, ammonia and CO(2). This chain is N-succinylarginine dihydrolase, found in Acinetobacter baumannii (strain ATCC 17978 / DSM 105126 / CIP 53.77 / LMG 1025 / NCDC KC755 / 5377).